The sequence spans 131 residues: Large ribosomal subunit protein bL12 (131 aa).

The protein belongs to the bacterial ribosomal protein bL12 family. Homodimer. Part of the ribosomal stalk of the 50S ribosomal subunit. Forms a multimeric L10(L12)X complex, where L10 forms an elongated spine to which 2 to 4 L12 dimers bind in a sequential fashion. Binds GTP-bound translation factors.

In terms of biological role, forms part of the ribosomal stalk which helps the ribosome interact with GTP-bound translation factors. Is thus essential for accurate translation. The protein is Large ribosomal subunit protein bL12 of Prochlorococcus marinus (strain MIT 9313).